The sequence spans 734 residues: Photosystem I P700 chlorophyll a apoprotein A2 (734 aa).

8 consecutive transmembrane segments (helical) span residues 46 to 69 (IFAS…FHVA), 135 to 158 (LYTG…LHLQ), 175 to 199 (LNHH…HVAI), 273 to 291 (IAHH…GHMY), 330 to 353 (IHFQ…QHMY), 369 to 395 (AALY…IFFI), 417 to 439 (AIKS…LYVH), and 517 to 535 (FLVH…LILV). [4Fe-4S] cluster contacts are provided by Cys-559 and Cys-568. Helical transmembrane passes span 575 to 596 (AFYL…YWHW) and 643 to 665 (LSVW…MFLI). Positions 654, 662, and 670 each coordinate chlorophyll a. Trp-671 contacts phylloquinone. Residues 707–727 (LVGLAHFSVGYIFTYAAFLIA) form a helical membrane-spanning segment.

Belongs to the PsaA/PsaB family. As to quaternary structure, the PsaA/B heterodimer binds the P700 chlorophyll special pair and subsequent electron acceptors. PSI consists of a core antenna complex that captures photons, and an electron transfer chain that converts photonic excitation into a charge separation. The eukaryotic PSI reaction center is composed of at least 11 subunits. P700 is a chlorophyll a/chlorophyll a' dimer, A0 is one or more chlorophyll a, A1 is one or both phylloquinones and FX is a shared 4Fe-4S iron-sulfur center. is required as a cofactor.

The protein localises to the plastid. The protein resides in the chloroplast thylakoid membrane. The catalysed reaction is reduced [plastocyanin] + hnu + oxidized [2Fe-2S]-[ferredoxin] = oxidized [plastocyanin] + reduced [2Fe-2S]-[ferredoxin]. PsaA and PsaB bind P700, the primary electron donor of photosystem I (PSI), as well as the electron acceptors A0, A1 and FX. PSI is a plastocyanin-ferredoxin oxidoreductase, converting photonic excitation into a charge separation, which transfers an electron from the donor P700 chlorophyll pair to the spectroscopically characterized acceptors A0, A1, FX, FA and FB in turn. Oxidized P700 is reduced on the lumenal side of the thylakoid membrane by plastocyanin. The protein is Photosystem I P700 chlorophyll a apoprotein A2 of Illicium oligandrum (Star anise).